The sequence spans 392 residues: ER-bound oxygenase mpaB (392 aa).

The Lumenal portion of the chain corresponds to 1–21; the sequence is MSLPLPPALSELARALPYSRT. A helical membrane pass occupies residues 22-41; the sequence is QWLPIFVGFLIGYPILIRAL. Residues 42–392 are Cytoplasmic-facing; that stretch reads RYKRHGEMKK…WSKYHATTND (351 aa). A disordered region spans residues 352–376; it reads DLGQKKGPQGDPGNDEGIKDLKDGE. Positions 367–376 are enriched in basic and acidic residues; that stretch reads EGIKDLKDGE.

Belongs to the mpaB oxygenase family.

The protein resides in the endoplasmic reticulum membrane. It carries out the reaction 4-farnesyl-3,5-dihydroxy-6-methylphthalide + AH2 + 2 O2 = (4E,8E)-10-(4,6-dihydroxy-7-methyl-3-oxo-1,3-dihydro-2-benzofuran-5-yl)-4,8-dimethyldeca-4,8-dienoate + acetone + A + H2O + H(+). It functions in the pathway secondary metabolite biosynthesis; terpenoid biosynthesis. Its function is as follows. ER-bound oxygenase; part of the gene cluster that mediates the biosynthesis of mycophenolic acid (MPA), the first isolated antibiotic natural product in the world obtained from a culture of Penicillium brevicompactum in 1893. MpaB catalyzes the oxidative cleavage the C19-C20 double bond in farnesyl-DHMP (FDHMP) to yield FDHMP-3C via a mycophenolic aldehyde intermediate. The first step of the pathway is the synthesis of 5-methylorsellinic acid (5MOA) by the cytosolic polyketide synthase mpaC. 5MOA is then converted to the phthalide compound 5,7-dihydroxy-4,6-dimethylphthalide (DHMP) by the endoplasmic reticulum-bound cytochrome P450 monooxygenase mpaDE. MpaDE first catalyzes hydroxylation of 5-MOA to 4,6-dihydroxy-2-(hydroxymethyl)-3-methylbenzoic acid (DHMB). MpaDE then acts as a lactone synthase that catalyzes the ring closure to convert DHMB into DHMP. The next step is the prenylation of DHMP by the Golgi apparatus-associated prenyltransferase mpaA to yield farnesyl-DHMP (FDHMP). The ER-bound oxygenase mpaB then mediates the oxidative cleavage the C19-C20 double bond in FDHMP to yield FDHMP-3C via a mycophenolic aldehyde intermediate. The O-methyltransferase mpaG catalyzes the methylation of FDHMP-3C to yield MFDHMP-3C. After the cytosolic methylation of FDHMP-3C, MFDHMP-3C enters into peroxisomes probably via free diffusion due to its low molecular weight. Upon a peroxisomal CoA ligation reaction, catalyzed by a beta-oxidation component enzyme acyl-CoA ligase ACL891, MFDHMP-3C-CoA would then be restricted to peroxisomes for the following beta-oxidation pathway steps. The peroxisomal beta-oxidation machinery than converts MFDHMP-3C-CoA into MPA_CoA, via a beta-oxidation chain-shortening process. Finally mpaH acts as a peroxisomal acyl-CoA hydrolase with high substrate specificity toward MPA-CoA to release the final product MPA. The sequence is that of ER-bound oxygenase mpaB from Penicillium brevicompactum.